Here is a 557-residue protein sequence, read N- to C-terminus: D-arabinono-1,4-lactone oxidase (557 aa).

The region spanning F26–K209 is the FAD-binding PCMH-type domain. H63 is subject to Pros-8alpha-FAD histidine.

Belongs to the oxygen-dependent FAD-linked oxidoreductase family. The cofactor is FAD.

The protein localises to the mitochondrion membrane. The catalysed reaction is D-arabinono-1,4-lactone + O2 = dehydro-D-arabinono-1,4-lactone + H2O2 + H(+). It participates in cofactor biosynthesis; D-erythroascorbate biosynthesis; dehydro-D-arabinono-1,4-lactone from D-arabinose: step 2/2. The sequence is that of D-arabinono-1,4-lactone oxidase (ALO1) from Debaryomyces hansenii (strain ATCC 36239 / CBS 767 / BCRC 21394 / JCM 1990 / NBRC 0083 / IGC 2968) (Yeast).